Here is a 254-residue protein sequence, read N- to C-terminus: Imidazole glycerol phosphate synthase subunit HisF (254 aa).

Catalysis depends on residues aspartate 12 and aspartate 131.

The protein belongs to the HisA/HisF family. As to quaternary structure, heterodimer of HisH and HisF.

It is found in the cytoplasm. It catalyses the reaction 5-[(5-phospho-1-deoxy-D-ribulos-1-ylimino)methylamino]-1-(5-phospho-beta-D-ribosyl)imidazole-4-carboxamide + L-glutamine = D-erythro-1-(imidazol-4-yl)glycerol 3-phosphate + 5-amino-1-(5-phospho-beta-D-ribosyl)imidazole-4-carboxamide + L-glutamate + H(+). It functions in the pathway amino-acid biosynthesis; L-histidine biosynthesis; L-histidine from 5-phospho-alpha-D-ribose 1-diphosphate: step 5/9. Functionally, IGPS catalyzes the conversion of PRFAR and glutamine to IGP, AICAR and glutamate. The HisF subunit catalyzes the cyclization activity that produces IGP and AICAR from PRFAR using the ammonia provided by the HisH subunit. The chain is Imidazole glycerol phosphate synthase subunit HisF from Corynebacterium aurimucosum (strain ATCC 700975 / DSM 44827 / CIP 107346 / CN-1) (Corynebacterium nigricans).